Reading from the N-terminus, the 277-residue chain is Reaction center protein L chain (277 aa).

3 helical membrane passes run Phe30–Trp52, Gly84–Val106, and Gly113–Ile135. His154 and His174 together coordinate (7R,8Z)-bacteriochlorophyll b. A helical transmembrane segment spans residues Ala173 to Val195. Fe cation is bound at residue His191. A ubiquinone is bound at residue Phe217. His231 contacts Fe cation. The chain crosses the membrane as a helical span at residues Leu233–Val255.

This sequence belongs to the reaction center PufL/M/PsbA/D family. Reaction center is composed of four bacteriochlorophylls, two bacteriopheophytins, two ubiquinones, one iron, and three highly hydrophobic polypeptide chains (designated L, M, and H).

It is found in the cellular chromatophore membrane. In terms of biological role, the reaction center is a membrane-bound complex that mediates the initial photochemical event in the electron transfer process of photosynthesis. The sequence is that of Reaction center protein L chain (pufL) from Rhodopseudomonas palustris (strain ATCC BAA-98 / CGA009).